Here is a 770-residue protein sequence, read N- to C-terminus: Signal transducer and activator of transcription 3 (770 aa).

At alanine 2 the chain carries N-acetylalanine. Residues lysine 49 and lysine 87 each carry the N6-acetyllysine modification. An Essential for nuclear import motif is present at residues 150–162 (DVRKRVQDLEQKM). The SH2 domain maps to 580–670 (WNEGYIMGFI…DATNILVSPL (91 aa)). Allysine; alternate is present on residues lysine 601, lysine 615, and lysine 631. 3 positions are modified to N6-acetyllysine; alternate: lysine 601, lysine 615, and lysine 631. Tyrosine 640 carries the post-translational modification Phosphotyrosine; by TYK2. Lysine 685 is subject to Allysine; alternate. N6-acetyllysine; alternate is present on lysine 685. Proline 704 is subject to Phosphotyrosine. Tyrosine 705 is modified (phosphotyrosine; by FER and PTK6). Lysine 707 bears the N6-acetyllysine mark. The residue at position 714 (threonine 714) is a Phosphothreonine. Residue serine 727 is modified to Phosphoserine; by DYRK2, NLK, NEK6, IRAK1, RPS6KA5, ZIPK/DAPK3 and PKC/PRKCE.

It belongs to the transcription factor STAT family. As to quaternary structure, forms a homodimer or a heterodimer with a related family member (at least STAT1). Component of a promoter-binding complex composed of STAT3, NFATC3 and NFATC4; complex formation is enhanced by calcineurin. Interacts with IL31RA, NCOA1, PELP1, SIPAR, SOCS7, STATIP1 and TMF1. Interacts with IL23R in presence of IL23. Interacts (via SH2 domain) with NLK. Interacts with ARL2BP; the interaction is enhanced by LIF and JAK1 expression. Interacts with KPNA4 and KPNA5; KPNA4 may be the primary mediator of nuclear import. Interacts with CAV2; the interaction is increased on insulin-induced tyrosine phosphorylation of CAV2 and leads to STAT3 activation. Interacts with ARL2BP; interaction is enhanced with ARL2. Interacts with NEK6. Binds to CDK9 when activated and nuclear. Interacts with BMX. Interacts with ZIPK/DAPK3. Interacts with PIAS3; the interaction occurs on stimulation by IL6, CNTF or OSM and inhibits the DNA binding activity of STAT3. In prostate cancer cells, interacts with PRKCE and promotes DNA binding activity of STAT3. Interacts with STMN3, antagonizing its microtubule-destabilizing activity. Interacts with the 'Lys-129' acetylated form of BIRC5/survivin. Interacts with FER. Interacts (via SH2 domain) with EIF2AK2/PKR (via the kinase catalytic domain). Interacts with INPP5F; the interaction is independent of STAT3 Tyr-705 phosphorylation status. Interacts with FGFR4. Interacts with OCIAD1. Interacts with OCIAD2. Interacts (unphosphorylated or phosphorylated at Ser-727) with PHB1. Interacts and may form heterodimers with NHLH1. Found in a complex with SLC39A6, SLC39A10 and with the 'Ser-727' phosphorylated form of STAT3 throughout mitosis. Interacts (when phosphorylated at Tyr-705) with CD274/PD-L1; promoting nuclear translocation of CD274/PD-L1. Interacts (when acetylated) with EP300 (via bromo domain); interaction takes place following STAT3 acetylation by EP300 and promotes enhanceosome assembly. Interacts (when acetylated) with BRD2 (via bromo domain); interaction promotes STAT3 recruitment to chromatin and T-helper Th17 cell differentiation. Interacts with FAM220A/SIPAR; the interaction occurs in both the nucleus and the cytoplasm, is enhanced by IL6 and promotes STAT3 dephosphorylation. Interacts in both unphosphorylated and phosphorylated forms with FAM220A but interacts preferentially in the phosphorylated form in the nucleus. Interacts with PTPN2; the interaction is promoted by FAM220A and leads to STAT3 dephosphorylation which negatively regulates STAT3 transcriptional activator activity. (Microbial infection) Interacts with HCV core protein. In terms of assembly, (Microbial infection) Interacts with S.typhimurium SarA. As to quaternary structure, (Microbial infection) Interacts with human cytomegalovirus (HHV-5) immediate early protein IE1; this interaction leads to STAT3 nuclear accumulation and disruption of IL6-induced STAT3 phosphorylation. In terms of processing, tyrosine phosphorylated upon stimulation with EGF. Tyrosine phosphorylated in response to constitutively activated FGFR1, FGFR2, FGFR3 and FGFR4. Activated through tyrosine phosphorylation by BMX. Tyrosine phosphorylated in response to IL6, IL11, LIF, CNTF, KITLG/SCF, CSF1, EGF, PDGF, IFN-alpha, LEP and OSM. Activated KIT promotes phosphorylation on tyrosine residues and subsequent translocation to the nucleus. Phosphorylated on serine upon DNA damage, probably by ATM or ATR. Serine phosphorylation is important for the formation of stable DNA-binding STAT3 homodimers and maximal transcriptional activity. ARL2BP may participate in keeping the phosphorylated state of STAT3 within the nucleus. Upon LPS challenge, phosphorylated within the nucleus by IRAK1. Upon erythropoietin treatment, phosphorylated on Ser-727 by RPS6KA5. Dephosphorylation on tyrosine residues by PTPN2 negatively regulates IL6/interleukin-6 signaling. Phosphorylation at Tyr-705 by PTK6, isoform M2 of PKM (PKM2) or FER leads to an increase of its transcriptional activity. Phosphorylation at Tyr-705 is increased in the presence of calcineurin. Phosphorylation at Tyr-640 by TYK2 negatively regulates transcriptional activity. Post-translationally, acetylated on lysine residues by EP300/p300, promoting its activation. Acetylation at Lys-49 and Lys-87 by EP300/p300 promotes its activation. Acetylation at Lys-87 by EP300/p300 promotes its association with BRD2 and recruitment to chromatin. Deacetylated at Lys-49 and Lys-87 by HDAC1. Acetylation at Lys-685 by EP300/p300 promotes its homodimerization and activation. Deacetylated at Lys-685 by HDAC3. Acetylated on lysine residues by CREBBP. Deacetylation by LOXL3 leads to disrupt STAT3 dimerization and inhibit STAT3 transcription activity. Oxidation of lysine residues to allysine on STAT3 preferentially takes place on lysine residues that are acetylated. Some lysine residues are oxidized to allysine by LOXL3, leading to disrupt STAT3 dimerization and inhibit STAT3 transcription activity. Oxidation of lysine residues to allysine on STAT3 preferentially takes place on lysine residues that are acetylated. In terms of processing, (Microbial infection) Phosphorylated on Tyr-705 in the presence of S.typhimurium SarA. In terms of tissue distribution, heart, brain, placenta, lung, liver, skeletal muscle, kidney and pancreas. Expressed in naive CD4(+) T cells as well as T-helper Th17, Th1 and Th2 cells.

The protein resides in the cytoplasm. It localises to the nucleus. In terms of biological role, signal transducer and transcription activator that mediates cellular responses to interleukins, KITLG/SCF, LEP and other growth factors. Once activated, recruits coactivators, such as NCOA1 or MED1, to the promoter region of the target gene. May mediate cellular responses to activated FGFR1, FGFR2, FGFR3 and FGFR4. Upon activation of IL6ST/gp130 signaling by interleukin-6 (IL6), binds to the IL6-responsive elements identified in the promoters of various acute-phase protein genes. Activated by IL31 through IL31RA. Acts as a regulator of inflammatory response by regulating differentiation of naive CD4(+) T-cells into T-helper Th17 or regulatory T-cells (Treg): acetylation promotes its transcription activity and cell differentiation while deacetylation and oxidation of lysine residues by LOXL3 inhibits differentiation. Involved in cell cycle regulation by inducing the expression of key genes for the progression from G1 to S phase, such as CCND1. Mediates the effects of LEP on melanocortin production, body energy homeostasis and lactation. May play an apoptotic role by transctivating BIRC5 expression under LEP activation. Cytoplasmic STAT3 represses macroautophagy by inhibiting EIF2AK2/PKR activity. Plays a crucial role in basal beta cell functions, such as regulation of insulin secretion. Following JAK/STAT signaling activation and as part of a complex with NFATC3 and NFATC4, binds to the alpha-beta E4 promoter region of CRYAB and activates transcription in cardiomyocytes. This chain is Signal transducer and activator of transcription 3, found in Homo sapiens (Human).